The primary structure comprises 316 residues: 4-hydroxy-3-methylbut-2-enyl diphosphate reductase (316 aa).

Cys12 provides a ligand contact to [4Fe-4S] cluster. (2E)-4-hydroxy-3-methylbut-2-enyl diphosphate is bound by residues His41 and His74. Dimethylallyl diphosphate is bound by residues His41 and His74. Positions 41 and 74 each coordinate isopentenyl diphosphate. Residue Cys96 participates in [4Fe-4S] cluster binding. (2E)-4-hydroxy-3-methylbut-2-enyl diphosphate is bound at residue His124. His124 contributes to the dimethylallyl diphosphate binding site. His124 is a binding site for isopentenyl diphosphate. Glu126 acts as the Proton donor in catalysis. Residue Thr167 participates in (2E)-4-hydroxy-3-methylbut-2-enyl diphosphate binding. Cys197 provides a ligand contact to [4Fe-4S] cluster. Residues Ser225, Ser226, Asn227, and Ser269 each coordinate (2E)-4-hydroxy-3-methylbut-2-enyl diphosphate. Residues Ser225, Ser226, Asn227, and Ser269 each contribute to the dimethylallyl diphosphate site. The isopentenyl diphosphate site is built by Ser225, Ser226, Asn227, and Ser269.

The protein belongs to the IspH family. In terms of assembly, homodimer. It depends on [4Fe-4S] cluster as a cofactor.

It carries out the reaction isopentenyl diphosphate + 2 oxidized [2Fe-2S]-[ferredoxin] + H2O = (2E)-4-hydroxy-3-methylbut-2-enyl diphosphate + 2 reduced [2Fe-2S]-[ferredoxin] + 2 H(+). The catalysed reaction is dimethylallyl diphosphate + 2 oxidized [2Fe-2S]-[ferredoxin] + H2O = (2E)-4-hydroxy-3-methylbut-2-enyl diphosphate + 2 reduced [2Fe-2S]-[ferredoxin] + 2 H(+). The protein operates within isoprenoid biosynthesis; dimethylallyl diphosphate biosynthesis; dimethylallyl diphosphate from (2E)-4-hydroxy-3-methylbutenyl diphosphate: step 1/1. It participates in isoprenoid biosynthesis; isopentenyl diphosphate biosynthesis via DXP pathway; isopentenyl diphosphate from 1-deoxy-D-xylulose 5-phosphate: step 6/6. Catalyzes the conversion of 1-hydroxy-2-methyl-2-(E)-butenyl 4-diphosphate (HMBPP) into a mixture of isopentenyl diphosphate (IPP) and dimethylallyl diphosphate (DMAPP). Acts in the terminal step of the DOXP/MEP pathway for isoprenoid precursor biosynthesis. The protein is 4-hydroxy-3-methylbut-2-enyl diphosphate reductase of Salmonella paratyphi A (strain ATCC 9150 / SARB42).